Reading from the N-terminus, the 118-residue chain is Non-specific lipid-transfer protein-like 1 (118 aa).

The SCP2 domain occupies 5 to 113; sequence SDVIFEEIKE…KLRTILDPKM (109 aa).

This is Non-specific lipid-transfer protein-like 1 (nlt-1) from Caenorhabditis elegans.